The sequence spans 459 residues: Methylenetetrahydrofolate--tRNA-(uracil-5-)-methyltransferase TrmFO (459 aa).

15 to 20 (GAGLAG) contributes to the FAD binding site.

It belongs to the MnmG family. TrmFO subfamily. FAD serves as cofactor.

Its subcellular location is the cytoplasm. The catalysed reaction is uridine(54) in tRNA + (6R)-5,10-methylene-5,6,7,8-tetrahydrofolate + NADH + H(+) = 5-methyluridine(54) in tRNA + (6S)-5,6,7,8-tetrahydrofolate + NAD(+). The enzyme catalyses uridine(54) in tRNA + (6R)-5,10-methylene-5,6,7,8-tetrahydrofolate + NADPH + H(+) = 5-methyluridine(54) in tRNA + (6S)-5,6,7,8-tetrahydrofolate + NADP(+). Functionally, catalyzes the folate-dependent formation of 5-methyl-uridine at position 54 (M-5-U54) in all tRNAs. The protein is Methylenetetrahydrofolate--tRNA-(uracil-5-)-methyltransferase TrmFO of Syntrophotalea carbinolica (strain DSM 2380 / NBRC 103641 / GraBd1) (Pelobacter carbinolicus).